The following is a 294-amino-acid chain: Enoyl-CoA hydratase domain-containing protein 3, mitochondrial (294 aa).

A mitochondrion-targeting transit peptide spans 1–61 (MSWLRSCGER…IILNNPQQRN (61 aa)).

Belongs to the enoyl-CoA hydratase/isomerase family.

It localises to the mitochondrion. Functionally, may play a role in fatty acid biosynthesis and insulin sensitivity. In Xenopus laevis (African clawed frog), this protein is Enoyl-CoA hydratase domain-containing protein 3, mitochondrial (echdc3).